Here is a 669-residue protein sequence, read N- to C-terminus: Glycine--tRNA ligase beta subunit (669 aa).

Belongs to the class-II aminoacyl-tRNA synthetase family. In terms of assembly, tetramer of two alpha and two beta subunits.

The protein localises to the cytoplasm. It carries out the reaction tRNA(Gly) + glycine + ATP = glycyl-tRNA(Gly) + AMP + diphosphate. The protein is Glycine--tRNA ligase beta subunit of Phenylobacterium zucineum (strain HLK1).